The chain runs to 134 residues: Small ribosomal subunit protein uS9 (134 aa).

The interval 113 to 134 (REVERKKYGLKKARRAPQFSKR) is disordered. Residues 120–134 (YGLKKARRAPQFSKR) show a composition bias toward basic residues.

The protein belongs to the universal ribosomal protein uS9 family.

This Thermotoga petrophila (strain ATCC BAA-488 / DSM 13995 / JCM 10881 / RKU-1) protein is Small ribosomal subunit protein uS9.